A 258-amino-acid polypeptide reads, in one-letter code: Ribosomal RNA small subunit methyltransferase J (258 aa).

Residues 123–124 (ER) and Asp-177 each bind S-adenosyl-L-methionine. The tract at residues 232 to 258 (IDGPKPSHSLEGKSSRYDIYPKKALKA) is disordered. Residues 239-252 (HSLEGKSSRYDIYP) are compositionally biased toward basic and acidic residues.

The protein belongs to the methyltransferase superfamily. RsmJ family.

The protein localises to the cytoplasm. It carries out the reaction guanosine(1516) in 16S rRNA + S-adenosyl-L-methionine = N(2)-methylguanosine(1516) in 16S rRNA + S-adenosyl-L-homocysteine + H(+). Functionally, specifically methylates the guanosine in position 1516 of 16S rRNA. This is Ribosomal RNA small subunit methyltransferase J from Pseudomonas putida (strain GB-1).